A 323-amino-acid chain; its full sequence is E3 ubiquitin-protein ligase SIRP1 (323 aa).

The segment at 199-240 adopts an RING-type; atypical zinc-finger fold; the sequence is CSVCLDDLEVGSQAKQMPCEHKFHSSCILPWLELHSSCPVCR. Disordered regions lie at residues 248–280 and 296–323; these read TKDL…ESSN and REAQ…AGHS. Positions 259 to 269 are enriched in basic and acidic residues; sequence RVEDSHEEVRA.

It localises to the cytoplasm. The enzyme catalyses S-ubiquitinyl-[E2 ubiquitin-conjugating enzyme]-L-cysteine + [acceptor protein]-L-lysine = [E2 ubiquitin-conjugating enzyme]-L-cysteine + N(6)-ubiquitinyl-[acceptor protein]-L-lysine.. It functions in the pathway protein modification; protein ubiquitination. Its function is as follows. Possesses E3 ubiqutin-protein ligase activity in vitro. Acts as negative regulator of salinity stress tolerance mediated by the ubiquitin-proteasome degradation pathway. This chain is E3 ubiquitin-protein ligase SIRP1, found in Oryza sativa subsp. japonica (Rice).